Reading from the N-terminus, the 494-residue chain is V-type proton ATPase subunit B (494 aa).

This sequence belongs to the ATPase alpha/beta chains family. V-ATPase is a heteromultimeric enzyme composed of a peripheral catalytic V1 complex (main components: subunits A, B, C, D, E, and F) attached to an integral membrane V0 proton pore complex (main component: the proteolipid protein).

Non-catalytic subunit of the peripheral V1 complex of vacuolar ATPase. V-ATPase is responsible for acidifying a variety of intracellular compartments in eukaryotic cells. This is V-type proton ATPase subunit B (VAPB) from Plasmodium falciparum.